The primary structure comprises 384 residues: Acetylgalactosaminyl-O-glycosyl-glycoprotein beta-1,3-N-acetylglucosaminyltransferase (384 aa).

The Cytoplasmic portion of the chain corresponds to 1-12 (MAFPCRRSLTAK). The chain crosses the membrane as a helical; Signal-anchor for type II membrane protein span at residues 13–31 (TLACLLVGVSFLALQQWFL). The Lumenal segment spans residues 32-384 (QAPRSPREER…LSCDRGHRVS (353 aa)). The disordered stretch occupies residues 34-68 (PRSPREERSPQEETPEGPTDAPAADEPPSELVPGP). N-linked (GlcNAc...) asparagine glycosylation is found at asparagine 73, asparagine 77, and asparagine 196.

This sequence belongs to the glycosyltransferase 31 family. As to expression, present in stomach and colon (at protein level). Restricted in the stomach, colon and small intestine, where core 3 structure is present.

The protein resides in the golgi apparatus membrane. It carries out the reaction a 3-O-[N-acetyl-alpha-D-galactosaminyl]-L-threonyl-[protein] + UDP-N-acetyl-alpha-D-glucosamine = a 3-O-[N-acetyl-beta-D-glucosaminyl-(1-&gt;3)-N-acetyl-alpha-D-galactosaminyl]-L-threonyl-[protein] + UDP + H(+). The catalysed reaction is a 3-O-[N-acetyl-alpha-D-galactosaminyl]-L-seryl-[protein] + UDP-N-acetyl-alpha-D-glucosamine = 3-O-[N-acetyl-beta-D-glucosaminyl-(1-&gt;3)-N-acetyl-alpha-D-galactosaminyl]-L-seryl-[protein] + UDP + H(+). The protein operates within protein modification; protein glycosylation. In terms of biological role, beta-1,3-N-acetylglucosaminyltransferase that synthesizes the core 3 structure of the O-glycan, an important precursor in the biosynthesis of mucin-type glycoproteins. Plays an important role in the synthesis of mucin-type O-glycans in digestive organs. This Homo sapiens (Human) protein is Acetylgalactosaminyl-O-glycosyl-glycoprotein beta-1,3-N-acetylglucosaminyltransferase (B3GNT6).